Here is a 344-residue protein sequence, read N- to C-terminus: GDSL esterase/lipase At2g19010 (344 aa).

The first 21 residues, 1–21 (MSKACWLVAAIIFTAATVVYG), serve as a signal peptide directing secretion. Ser33 (nucleophile) is an active-site residue. An N-linked (GlcNAc...) asparagine glycan is attached at Asn303. Catalysis depends on residues Asp311 and His314.

Belongs to the 'GDSL' lipolytic enzyme family.

Its subcellular location is the secreted. In Arabidopsis thaliana (Mouse-ear cress), this protein is GDSL esterase/lipase At2g19010.